Consider the following 102-residue polypeptide: Integration host factor subunit beta (102 aa).

This sequence belongs to the bacterial histone-like protein family. Heterodimer of an alpha and a beta chain.

In terms of biological role, this protein is one of the two subunits of integration host factor, a specific DNA-binding protein that functions in genetic recombination as well as in transcriptional and translational control. This chain is Integration host factor subunit beta (ihfB), found in Rhizobium radiobacter (Agrobacterium tumefaciens).